A 55-amino-acid polypeptide reads, in one-letter code: Large ribosomal subunit protein bL33A (55 aa).

The protein belongs to the bacterial ribosomal protein bL33 family.

In Mycolicibacterium vanbaalenii (strain DSM 7251 / JCM 13017 / BCRC 16820 / KCTC 9966 / NRRL B-24157 / PYR-1) (Mycobacterium vanbaalenii), this protein is Large ribosomal subunit protein bL33A.